The chain runs to 221 residues: DNA mismatch repair protein MutH (221 aa).

The protein belongs to the MutH family.

The protein localises to the cytoplasm. Its function is as follows. Sequence-specific endonuclease that cleaves unmethylated GATC sequences. It is involved in DNA mismatch repair. The chain is DNA mismatch repair protein MutH from Vibrio cholerae serotype O1 (strain ATCC 39541 / Classical Ogawa 395 / O395).